The sequence spans 329 residues: Sex comb on midleg-like protein 1 (329 aa).

A phosphoserine mark is found at Ser-138 and Ser-238. An SAM domain is found at 258 to 325 (WSVEAVVLFL…YYIDRLKQGK (68 aa)).

Belongs to the SCM family.

It is found in the nucleus. Putative Polycomb group (PcG) protein. PcG proteins act by forming multiprotein complexes, which are required to maintain the transcriptionally repressive state of homeotic genes throughout development. May be involved in spermatogenesis during sexual maturation. In Nomascus leucogenys (Northern white-cheeked gibbon), this protein is Sex comb on midleg-like protein 1 (SCML1).